Consider the following 292-residue polypeptide: NAD kinase (292 aa).

Asp-73 functions as the Proton acceptor in the catalytic mechanism. Residues 73–74, 147–148, His-158, Arg-175, Asp-177, 188–193, and Gln-247 contribute to the NAD(+) site; these read DG, NE, and TAYSLS.

It belongs to the NAD kinase family. The cofactor is a divalent metal cation.

It is found in the cytoplasm. The enzyme catalyses NAD(+) + ATP = ADP + NADP(+) + H(+). In terms of biological role, involved in the regulation of the intracellular balance of NAD and NADP, and is a key enzyme in the biosynthesis of NADP. Catalyzes specifically the phosphorylation on 2'-hydroxyl of the adenosine moiety of NAD to yield NADP. The polypeptide is NAD kinase (Salmonella agona (strain SL483)).